Here is a 123-residue protein sequence, read N- to C-terminus: Probable histone H2B 4 (123 aa).

The disordered stretch occupies residues 1 to 30; that stretch reads MPPKPSAKGAKKAAKTVVAKPKDGKKRRHA. S110 carries an O-linked (GlcNAc) serine glycan. A Glycyl lysine isopeptide (Lys-Gly) (interchain with G-Cter in ubiquitin) cross-link involves residue K118.

It belongs to the histone H2B family. As to quaternary structure, the nucleosome is a histone octamer containing two molecules each of H2A, H2B, H3 and H4 assembled in one H3-H4 heterotetramer and two H2A-H2B heterodimers. The octamer wraps approximately 147 bp of DNA. Monoubiquitination of Lys-118 gives a specific tag for epigenetic transcriptional activation and is also prerequisite for histone H3 'Lys-4' and 'Lys-79' methylation. Post-translationally, glcNAcylation at Ser-110 promotes monoubiquitination of Lys-118. It fluctuates in response to extracellular glucose, and associates with transcribed genes.

The protein localises to the nucleus. It localises to the chromosome. Its function is as follows. Core component of nucleosome. Nucleosomes wrap and compact DNA into chromatin, limiting DNA accessibility to the cellular machineries which require DNA as a template. Histones thereby play a central role in transcription regulation, DNA repair, DNA replication and chromosomal stability. DNA accessibility is regulated via a complex set of post-translational modifications of histones, also called histone code, and nucleosome remodeling. The chain is Probable histone H2B 4 (his-48) from Caenorhabditis elegans.